Consider the following 393-residue polypeptide: Nuclear speckle splicing regulatory protein 1 homolog (393 aa).

A disordered region spans residues 1–49 (MSAPPKRFGLIVKQKEEPKRAPVRVSSVFGDDDDDEAPATATNTSSASV). Residues 39–48 (ATATNTSSAS) show a composition bias toward low complexity. Positions 76 to 166 (NYDEIQAIKN…YREQEAEEAA (91 aa)) form a coiled coil. The tract at residues 187 to 350 (LLNDLARDPT…SLKDKLKPKR (164 aa)) is disordered. Over residues 199 to 209 (KQRKMEKKNVR) the composition is skewed to basic residues. 4 stretches are compositionally biased toward basic and acidic residues: residues 222 to 236 (EDVKKKEEPKKKSIY), 243 to 261 (DEKKSKAPEAPKKNFEGEL), 317 to 333 (DHAQRNQREKTKSKSPE), and 341 to 350 (SLKDKLKPKR).

The protein belongs to the NSRP1 family.

This chain is Nuclear speckle splicing regulatory protein 1 homolog, found in Caenorhabditis briggsae.